Consider the following 573-residue polypeptide: Sulfate adenylyltransferase (573 aa).

The N-terminal stretch occupies residues 1–169 (MSNPPHGGVL…LEAVNKLQHY (169 aa)). The catalytic stretch occupies residues 170–394 (DFVDLRYSPA…LRESHPPRSQ (225 aa)). Sulfate is bound at residue Q197. ATP-binding positions include 197 to 200 (QTRN) and 291 to 294 (GRDH). Residues T198, R199, and N200 contribute to the active site. R199 serves as a coordination point for sulfate. A295 contributes to the sulfate binding site. M333 contacts ATP. Residues 395–573 (QGFTVLFTGY…LESQGLLDRF (179 aa)) are allosteric regulation domain; adenylyl-sulfate kinase-like. 3'-phosphoadenylyl sulfate is bound by residues 434-437 (ENIR), R451, 477-478 (IA), and R515.

This sequence in the N-terminal section; belongs to the sulfate adenylyltransferase family. It in the C-terminal section; belongs to the APS kinase family. In terms of assembly, homohexamer. Dimer of trimers.

It localises to the cytoplasm. It carries out the reaction sulfate + ATP + H(+) = adenosine 5'-phosphosulfate + diphosphate. It functions in the pathway sulfur metabolism; hydrogen sulfide biosynthesis; sulfite from sulfate: step 1/3. With respect to regulation, allosterically inhibited by 3'-phosphoadenosine 5'-phosphosulfate (PAPS). Functionally, catalyzes the first intracellular reaction of sulfate assimilation, forming adenosine-5'-phosphosulfate (APS) from inorganic sulfate and ATP. Plays an important role in sulfate activation as a component of the biosynthesis pathway of sulfur-containing amino acids. The polypeptide is Sulfate adenylyltransferase (cys-11) (Neurospora crassa (strain ATCC 24698 / 74-OR23-1A / CBS 708.71 / DSM 1257 / FGSC 987)).